The chain runs to 324 residues: MATH domain and coiled-coil domain-containing protein At3g44790 (324 aa).

Residues 3–125 (YEKFTWVIKN…NNEVKIVVEV (123 aa)) form the MATH domain. The stretch at 241 to 309 (FKVDWLERKL…ALLEKEKAKS (69 aa)) forms a coiled coil.

The sequence is that of MATH domain and coiled-coil domain-containing protein At3g44790 from Arabidopsis thaliana (Mouse-ear cress).